A 268-amino-acid polypeptide reads, in one-letter code: Speedy protein E4A (268 aa).

Disordered stretches follow at residues 1 to 26 (MGEG…LGFV) and 43 to 97 (LCSE…LDSE). Residues 43–52 (LCSEEQSPQP) show a composition bias toward polar residues. A speedy/Ringo box; Required for CDK-binding region spans residues 134–265 (PEHHKVFTKL…DLWVWARDRT (132 aa)).

Belongs to the Speedy/Ringo family. In terms of assembly, interacts with CDK1. Does not interact with CDK2 in vivo. As to expression, testis-specific.

It is found in the nucleus. Promotes progression through the cell cycle via binding and activation of CDK1. This is Speedy protein E4A from Mus musculus (Mouse).